A 261-amino-acid polypeptide reads, in one-letter code: Glucosamine-6-phosphate deaminase (261 aa).

The Proton acceptor; for enolization step role is filled by Asp67. Residue Asp136 is the For ring-opening step of the active site. His138 (proton acceptor; for ring-opening step) is an active-site residue. Residue Glu143 is the For ring-opening step of the active site.

The protein belongs to the glucosamine/galactosamine-6-phosphate isomerase family. NagB subfamily.

The catalysed reaction is alpha-D-glucosamine 6-phosphate + H2O = beta-D-fructose 6-phosphate + NH4(+). It participates in amino-sugar metabolism; N-acetylneuraminate degradation; D-fructose 6-phosphate from N-acetylneuraminate: step 5/5. In terms of biological role, catalyzes the reversible isomerization-deamination of glucosamine 6-phosphate (GlcN6P) to form fructose 6-phosphate (Fru6P) and ammonium ion. In Beutenbergia cavernae (strain ATCC BAA-8 / DSM 12333 / CCUG 43141 / JCM 11478 / NBRC 16432 / NCIMB 13614 / HKI 0122), this protein is Glucosamine-6-phosphate deaminase.